Consider the following 288-residue polypeptide: NAD(P)H-hydrate epimerase (288 aa).

Residues 1-48 constitute a mitochondrion transit peptide; it reads MSALRALLGLGLLAAGSRLRRVPGRAGACPAGSAWWEARRPHSGGGGE. A YjeF N-terminal domain is found at 65–275; sequence AQAVDEELFN…ALEKKYQLNL (211 aa). A (6S)-NADPHX-binding site is contributed by 119–123; that stretch reads NNGGD. Asn-120 contributes to the K(+) binding site. An N6-succinyllysine modification is found at Lys-144. Residue Asp-185 coordinates K(+). Residues 189 to 195 and Asp-218 contribute to the (6S)-NADPHX site; that span reads GFSFKGD. Ser-221 is a K(+) binding site.

Belongs to the NnrE/AIBP family. In terms of assembly, homodimer. Interacts with APOA1 and APOA2. Requires K(+) as cofactor. Post-translationally, undergoes physiological phosphorylation during sperm capacitation, downstream to PKA activation.

It localises to the mitochondrion. The protein localises to the secreted. It catalyses the reaction (6R)-NADHX = (6S)-NADHX. It carries out the reaction (6R)-NADPHX = (6S)-NADPHX. Its function is as follows. Catalyzes the epimerization of the S- and R-forms of NAD(P)HX, a damaged form of NAD(P)H that is a result of enzymatic or heat-dependent hydration. This is a prerequisite for the S-specific NAD(P)H-hydrate dehydratase to allow the repair of both epimers of NAD(P)HX. Accelerates cholesterol efflux from endothelial cells to high-density lipoprotein (HDL) and thereby regulates angiogenesis. This chain is NAD(P)H-hydrate epimerase, found in Canis lupus familiaris (Dog).